We begin with the raw amino-acid sequence, 128 residues long: MWRIMMKSKLHRATVTAADLNYIGSITIDSDLMAAADILPNEKVQVVDNNNGARLETYAIPGPAGSGVICANGAAARLVQPGDIIIIIAYGIFDDREARTYQPRVIFLDARNKITAVKKGEQPGQVWV.

Catalysis depends on Ser-25, which acts as the Schiff-base intermediate with substrate; via pyruvic acid. A Pyruvic acid (Ser) modification is found at Ser-25. Thr-57 contributes to the substrate binding site. Tyr-58 functions as the Proton donor in the catalytic mechanism. 73–75 (GAA) serves as a coordination point for substrate.

This sequence belongs to the PanD family. As to quaternary structure, heterooctamer of four alpha and four beta subunits. Pyruvate serves as cofactor. Is synthesized initially as an inactive proenzyme, which is activated by self-cleavage at a specific serine bond to produce a beta-subunit with a hydroxyl group at its C-terminus and an alpha-subunit with a pyruvoyl group at its N-terminus.

The protein resides in the cytoplasm. The enzyme catalyses L-aspartate + H(+) = beta-alanine + CO2. It participates in cofactor biosynthesis; (R)-pantothenate biosynthesis; beta-alanine from L-aspartate: step 1/1. In terms of biological role, catalyzes the pyruvoyl-dependent decarboxylation of aspartate to produce beta-alanine. The sequence is that of Aspartate 1-decarboxylase from Moorella thermoacetica (strain ATCC 39073 / JCM 9320).